A 695-amino-acid polypeptide reads, in one-letter code: Interleukin-1 receptor accessory protein-like 1 (695 aa).

Positions 1-24 are cleaved as a signal peptide; that stretch reads MKAPIPHLILLYATFTQSLKVVTK. The region spanning 25 to 134 is the Ig-like C2-type 1 domain; sequence RGSADGCTDW…YCMKVSISLT (110 aa). Over 25–357 the chain is Extracellular; it reads RGSADGCTDW…LLHKRELMYT (333 aa). 2 cysteine pairs are disulfide-bonded: C31–C126 and C53–C118. N-linked (GlcNAc...) asparagine glycosylation is found at N63, N122, and N138. Intrachain disulfides connect C143/C185 and C164/C216. Ig-like C2-type domains are found at residues 143–232 and 242–350; these read CYNS…TELT and PKLL…VLLH. N-linked (GlcNAc...) asparagine glycosylation is found at N213, N264, and N331. C267 and C334 are oxidised to a cystine. Residues 358 to 378 form a helical membrane-spanning segment; sequence VELAGGLGAILLLLICSVTIY. Over 379–695 the chain is Cytoplasmic; sequence KCYKIEIMLF…RETSISSVIW (317 aa). The region spanning 403–558 is the TIR domain; it reads KDYDAYLSYT…KFWKRLQYEM (156 aa). The active site involves E490. The segment at 548–643 is interaction with NCS1; sequence SKFWKRLQYE…TGTLPLTSIG (96 aa). Positions 657-679 are disordered; the sequence is NGQRPQTKSNREPNPDEAHTNSA. Over residues 665 to 675 the composition is skewed to basic and acidic residues; that stretch reads SNREPNPDEAH.

The protein belongs to the interleukin-1 receptor family. Homodimer. Interacts (calcium-independent) with NCS1/FREQ. Interacts (via the first immunoglobilin domain) with PTPRD (via the second immunoglobilin domain); this interaction is PTPRD-splicing-dependent and induces pre- and post-synaptic differentiation of neurons and is required for IL1RAPL1-mediated synapse formation. Detected in total brain extracts, olfactory bulb, hippocampus and striatum (at protein level).

The protein resides in the cell membrane. It is found in the cytoplasm. It localises to the cell projection. The protein localises to the axon. Its subcellular location is the dendrite. It catalyses the reaction NAD(+) + H2O = ADP-D-ribose + nicotinamide + H(+). Its function is as follows. May regulate secretion and presynaptic differentiation through inhibition of the activity of N-type voltage-gated calcium channel. May activate the MAP kinase JNK. Plays a role in neurite outgrowth. During dendritic spine formation can bidirectionally induce pre- and post-synaptic differentiation of neurons by trans-synaptically binding to PTPRD. The sequence is that of Interleukin-1 receptor accessory protein-like 1 (Il1rapl1) from Mus musculus (Mouse).